A 100-amino-acid polypeptide reads, in one-letter code: Urease subunit gamma (100 aa).

This sequence belongs to the urease gamma subunit family. In terms of assembly, heterotrimer of UreA (gamma), UreB (beta) and UreC (alpha) subunits. Three heterotrimers associate to form the active enzyme.

Its subcellular location is the cytoplasm. It carries out the reaction urea + 2 H2O + H(+) = hydrogencarbonate + 2 NH4(+). Its pathway is nitrogen metabolism; urea degradation; CO(2) and NH(3) from urea (urease route): step 1/1. The sequence is that of Urease subunit gamma from Nitrosospira multiformis (strain ATCC 25196 / NCIMB 11849 / C 71).